Consider the following 341-residue polypeptide: tRNA N6-adenosine threonylcarbamoyltransferase (341 aa).

Fe cation contacts are provided by H111 and H115. Substrate contacts are provided by residues 134–138 (LVSGG), D167, G180, and N276. Fe cation is bound at residue D304.

The protein belongs to the KAE1 / TsaD family. It depends on Fe(2+) as a cofactor.

It is found in the cytoplasm. It catalyses the reaction L-threonylcarbamoyladenylate + adenosine(37) in tRNA = N(6)-L-threonylcarbamoyladenosine(37) in tRNA + AMP + H(+). In terms of biological role, required for the formation of a threonylcarbamoyl group on adenosine at position 37 (t(6)A37) in tRNAs that read codons beginning with adenine. Is involved in the transfer of the threonylcarbamoyl moiety of threonylcarbamoyl-AMP (TC-AMP) to the N6 group of A37, together with TsaE and TsaB. TsaD likely plays a direct catalytic role in this reaction. The polypeptide is tRNA N6-adenosine threonylcarbamoyltransferase (Pseudomonas fluorescens (strain SBW25)).